Here is a 204-residue protein sequence, read N- to C-terminus: Large ribosomal subunit protein uL22m (204 aa).

Residues 1–27 (MAASITASVWGTLLKIHRGLTASGCLP) constitute a mitochondrion transit peptide.

It belongs to the universal ribosomal protein uL22 family. As to quaternary structure, component of the mitochondrial ribosome large subunit (39S) which comprises a 16S rRNA and about 50 distinct proteins.

The protein resides in the mitochondrion. The chain is Large ribosomal subunit protein uL22m (mrpl22) from Xenopus tropicalis (Western clawed frog).